Consider the following 252-residue polypeptide: Trans-aconitate 2-methyltransferase (252 aa).

The protein belongs to the methyltransferase superfamily. Tam family.

Its subcellular location is the cytoplasm. It carries out the reaction trans-aconitate + S-adenosyl-L-methionine = (E)-3-(methoxycarbonyl)pent-2-enedioate + S-adenosyl-L-homocysteine. Its function is as follows. Catalyzes the S-adenosylmethionine monomethyl esterification of trans-aconitate. The chain is Trans-aconitate 2-methyltransferase from Shigella flexneri.